The chain runs to 326 residues: Homocysteine S-methyltransferase 1 (326 aa).

A Hcy-binding domain is found at 9 to 323 (LLEDLIEKCG…STIKAISRDL (315 aa)). Zn(2+) contacts are provided by Cys241, Cys308, and Cys309.

Zn(2+) is required as a cofactor. As to expression, expressed in roots, young leaves, florets and flowers. Not detected in old leaves.

The enzyme catalyses S-methyl-L-methionine + L-homocysteine = 2 L-methionine + H(+). Its activity is regulated as follows. Inhibited by L-methionine. Catalyzes methyl transfer from S-methylmethionine to homocysteine. The highest preference is for DL-homocysteine &gt;&gt; DL-cysteine. Has no selenocysteine methyltransferase activity. The polypeptide is Homocysteine S-methyltransferase 1 (HMT1) (Brassica oleracea var. italica (Broccoli)).